The primary structure comprises 364 residues: Probable endopolygalacturonase B (364 aa).

The N-terminal stretch at 1 to 20 (MHFFQSSLVAATMGAALVAA) is a signal peptide. A propeptide spanning residues 21 to 29 (APAADLETR) is cleaved from the precursor. A disulfide bridge connects residues C32 and C47. N-linked (GlcNAc...) asparagine glycans are attached at residues N138 and N141. 6 PbH1 repeats span residues 159 to 188 (SDHL…DVGS), 189 to 210 (STYI…AVNS), 211 to 231 (GEHI…SIGS), 240 to 261 (VNDV…RIKT), 269 to 291 (VTGV…VVQQ), and 303 to 324 (TNGV…TSSA). D203 functions as the Proton donor in the catalytic mechanism. The cysteines at positions 205 and 221 are disulfide-linked. The active site involves H225. C331 and C336 are disulfide-bonded. N-linked (GlcNAc...) asparagine glycosylation occurs at N338. Residues C355 and C364 are joined by a disulfide bond.

This sequence belongs to the glycosyl hydrolase 28 family.

It localises to the secreted. It catalyses the reaction (1,4-alpha-D-galacturonosyl)n+m + H2O = (1,4-alpha-D-galacturonosyl)n + (1,4-alpha-D-galacturonosyl)m.. Involved in maceration and soft-rotting of plant tissue. Hydrolyzes the 1,4-alpha glycosidic bonds of de-esterified pectate in the smooth region of the plant cell wall. This is Probable endopolygalacturonase B (pgaB) from Aspergillus fumigatus (strain ATCC MYA-4609 / CBS 101355 / FGSC A1100 / Af293) (Neosartorya fumigata).